We begin with the raw amino-acid sequence, 413 residues long: Serine hydroxymethyltransferase (413 aa).

Residues leucine 120 and 124-126 each bind (6S)-5,6,7,8-tetrahydrofolate; that span reads GHL. Position 228 is an N6-(pyridoxal phosphate)lysine (lysine 228).

The protein belongs to the SHMT family. In terms of assembly, homodimer. Requires pyridoxal 5'-phosphate as cofactor.

It localises to the cytoplasm. The enzyme catalyses (6R)-5,10-methylene-5,6,7,8-tetrahydrofolate + glycine + H2O = (6S)-5,6,7,8-tetrahydrofolate + L-serine. The protein operates within one-carbon metabolism; tetrahydrofolate interconversion. It functions in the pathway amino-acid biosynthesis; glycine biosynthesis; glycine from L-serine: step 1/1. In terms of biological role, catalyzes the reversible interconversion of serine and glycine with tetrahydrofolate (THF) serving as the one-carbon carrier. This reaction serves as the major source of one-carbon groups required for the biosynthesis of purines, thymidylate, methionine, and other important biomolecules. Also exhibits THF-independent aldolase activity toward beta-hydroxyamino acids, producing glycine and aldehydes, via a retro-aldol mechanism. This chain is Serine hydroxymethyltransferase, found in Agathobacter rectalis (strain ATCC 33656 / DSM 3377 / JCM 17463 / KCTC 5835 / VPI 0990) (Eubacterium rectale).